The sequence spans 353 residues: Protein RecA (353 aa).

An ATP-binding site is contributed by 67-74; it reads GPESSGKT.

The protein belongs to the RecA family.

The protein localises to the cytoplasm. In terms of biological role, can catalyze the hydrolysis of ATP in the presence of single-stranded DNA, the ATP-dependent uptake of single-stranded DNA by duplex DNA, and the ATP-dependent hybridization of homologous single-stranded DNAs. It interacts with LexA causing its activation and leading to its autocatalytic cleavage. This Shewanella woodyi (strain ATCC 51908 / MS32) protein is Protein RecA.